Here is an 86-residue protein sequence, read N- to C-terminus: Large ribosomal subunit protein uL23 (86 aa).

The protein belongs to the universal ribosomal protein uL23 family. Part of the 50S ribosomal subunit. Contacts protein L29.

In terms of biological role, binds to 23S rRNA. One of the proteins that surrounds the polypeptide exit tunnel on the outside of the ribosome. The polypeptide is Large ribosomal subunit protein uL23 (Thermococcus onnurineus (strain NA1)).